The following is a 438-amino-acid chain: Probable tRNA pseudouridine synthase D (438 aa).

The active-site Nucleophile is the Asp86. A TRUD domain is found at 165-390; it reads GVPNFFGIQR…SKGTRREVLL (226 aa).

The protein belongs to the pseudouridine synthase TruD family.

The enzyme catalyses uridine(13) in tRNA = pseudouridine(13) in tRNA. In terms of biological role, could be responsible for synthesis of pseudouridine from uracil-13 in transfer RNAs. The chain is Probable tRNA pseudouridine synthase D from Methanosarcina mazei (strain ATCC BAA-159 / DSM 3647 / Goe1 / Go1 / JCM 11833 / OCM 88) (Methanosarcina frisia).